The following is a 119-amino-acid chain: Gibberellin-regulated protein 9 (119 aa).

Positions 1 to 24 (MKKMNVVAFVTLIISFLLLSQVLA) are cleaved as a signal peptide.

Belongs to the GASA family. Post-translationally, six disulfide bonds may be present.

Its subcellular location is the secreted. Gibberellin-regulated protein that may function in hormonal controlled steps of development such as seed germination, flowering and seed maturation. The protein is Gibberellin-regulated protein 9 (GASA9) of Arabidopsis thaliana (Mouse-ear cress).